Here is a 262-residue protein sequence, read N- to C-terminus: Endoplasmic reticulum chaperone BiP (262 aa).

8 to 11 (GSTR) lines the ATP pocket. Residues 53–63 (QDTGDLVLLDV) form an interdomain linker region. The substrate-binding (SBD) stretch occupies residues 64-144 (CPLTLGIETV…PRGVPQIEVT (81 aa)). K91 is subject to N6-succinyllysine. R136 is modified (omega-N-methylarginine). T162 bears the O-AMP-threonine; alternate mark. Position 162 is a phosphothreonine; alternate (T162). K229 carries the post-translational modification N6,N6,N6-trimethyllysine; by METTL21A; in vitro. An N6,N6-dimethyllysine; alternate modification is found at K229. Position 229 is an N6-methyllysine; alternate (K229). N6-methyllysine is present on K235.

This sequence belongs to the heat shock protein 70 family. Monomer and homooligomer; homooligomerization via the interdomain linker inactivates the chaperone activity and acts as a storage of HSPA5/BiP molecules. Interacts with DNAJC1 (via J domain). Component of an EIF2 complex at least composed of CELF1/CUGBP1, CALR, CALR3, EIF2S1, EIF2S2, HSP90B1 and HSPA5. Part of a large chaperone multiprotein complex comprising DNAJB11, HSP90B1, HSPA5, HYOU, PDIA2, PDIA4, PDIA6, PPIB, SDF2L1, UGGT1 and very small amounts of ERP29, but not, or at very low levels, CALR nor CANX. Interacts with TMEM132A and TRIM21. May form a complex with ERLEC1, OS9, SEL1L and SYVN1. Interacts with DNAJC10. Interacts with DNAJB9/ERdj4; leading to recruit HSPA5/BiP to ERN1/IRE1. Interacts with ERN1/IRE1 (via luminal domain); the interaction takes place following interaction with DNAJB9/ERdj4 and leads to inactivate ERN1/IRE1, the interaction also competitively inhibits ERN1 interaction with MANF. Interacts directly with MANF (via SAP domain); the interaction inhibits ATP binding to HSPA5/BiP and subsequent nucleotide exchange. Interacts with EIF2AK3/PERK (via luminal domain); interaction leads to inactivate EIF2AK3/PERK. Interacts with MX1. Interacts with METTL23. Interacts with CEMIP; the interaction induces calcium leakage from the endoplasmic reticulum and cell migration. Interacts with PCSK4 form; the interaction takes place in the endoplasmic reticulum. Interacts with CIPC. Interacts with CCDC88B (via C-terminus); the interaction opposes ERN1-mediated JNK activation, protecting against apoptosis. Interacts with INPP5K; necessary for INPP5K localization at the endoplasmic reticulum. Interacts with MANF; the interaction is direct. Interacts with LOXL2; leading to activate the ERN1/IRE1-XBP1 pathway of the unfolded protein response. Interacts with CLU under stressed condition; interaction increases CLU protein stability; facilitates its retrotranslocation and redistribution to the mitochondria; cooperatively suppress stress-induced apoptosis by stabilizing mitochondrial membrane integrity. Interacts with CCDC47. Interacts with CLN3. Interacts with ELAPOR1; may regulate the function of HSPA5 in apoptosis and cell proliferation. Interacts with CASP7. Interacts with ILDR2; the interaction stabilizes ILDR2 expression. Interacts with ADAM7. In unstressed cells, AMPylation at Thr-162 by FICD inactivates the chaperome activity: AMPylated form is locked in a relatively inert state and only weakly stimulated by J domain-containing proteins. In response to endoplasmic reticulum stress, de-AMPylation by the same protein, FICD, restores the chaperone activity.

The protein localises to the endoplasmic reticulum lumen. It localises to the melanosome. The protein resides in the cytoplasm. It is found in the cell surface. The enzyme catalyses ATP + H2O = ADP + phosphate + H(+). Its activity is regulated as follows. The chaperone activity is regulated by ATP-induced allosteric coupling of the nucleotide-binding (NBD) and substrate-binding (SBD) domains. In the ADP-bound and nucleotide-free (apo) states, the two domains have little interaction. In contrast, in the ATP-bound state the two domains are tightly coupled, which results in drastically accelerated kinetics in both binding and release of polypeptide substrates. J domain-containing co-chaperones (DNAJB9/ERdj4 or DNAJC10/ERdj5) stimulate the ATPase activity and are required for efficient substrate recognition by HSPA5/BiP. Homooligomerization inactivates participating HSPA5/BiP protomers and probably act as reservoirs to store HSPA5/BiP molecules when they are not needed by the cell. Functionally, endoplasmic reticulum chaperone that plays a key role in protein folding and quality control in the endoplasmic reticulum lumen. Involved in the correct folding of proteins and degradation of misfolded proteins via its interaction with DNAJC10/ERdj5, probably to facilitate the release of DNAJC10/ERdj5 from its substrate. Acts as a key repressor of the EIF2AK3/PERK and ERN1/IRE1-mediated unfolded protein response (UPR). In the unstressed endoplasmic reticulum, recruited by DNAJB9/ERdj4 to the luminal region of ERN1/IRE1, leading to disrupt the dimerization of ERN1/IRE1, thereby inactivating ERN1/IRE1. Also binds and inactivates EIF2AK3/PERK in unstressed cells. Accumulation of misfolded protein in the endoplasmic reticulum causes release of HSPA5/BiP from ERN1/IRE1 and EIF2AK3/PERK, allowing their homodimerization and subsequent activation. Plays an auxiliary role in post-translational transport of small presecretory proteins across endoplasmic reticulum (ER). May function as an allosteric modulator for SEC61 channel-forming translocon complex, likely cooperating with SEC62 to enable the productive insertion of these precursors into SEC61 channel. Appears to specifically regulate translocation of precursors having inhibitory residues in their mature region that weaken channel gating. May also play a role in apoptosis and cell proliferation. In Sus scrofa (Pig), this protein is Endoplasmic reticulum chaperone BiP.